The primary structure comprises 789 residues: Endonuclease MutS2 (789 aa).

334 to 341 (GPNTGGKT) serves as a coordination point for ATP. The segment at 690 to 714 (PEKDIQQSGTGKIMKSKTGDTKSEV) is disordered. Positions 714–789 (VDVRGKNLEE…GMGVTIVELK (76 aa)) constitute a Smr domain.

Belongs to the DNA mismatch repair MutS family. MutS2 subfamily. As to quaternary structure, homodimer. Binds to stalled ribosomes, contacting rRNA.

Functionally, endonuclease that is involved in the suppression of homologous recombination and thus may have a key role in the control of bacterial genetic diversity. Acts as a ribosome collision sensor, splitting the ribosome into its 2 subunits. Detects stalled/collided 70S ribosomes which it binds and splits by an ATP-hydrolysis driven conformational change. Acts upstream of the ribosome quality control system (RQC), a ribosome-associated complex that mediates the extraction of incompletely synthesized nascent chains from stalled ribosomes and their subsequent degradation. Probably generates substrates for RQC. The polypeptide is Endonuclease MutS2 (Alkaliphilus metalliredigens (strain QYMF)).